A 907-amino-acid polypeptide reads, in one-letter code: CRM-domain containing factor CFM3B, chloroplastic (907 aa).

A chloroplast-targeting transit peptide spans 1 to 59; the sequence is MAINSSHHFCPMTTTTTTSAKFVDSLGSSFCKFHGTSSSISLRSYRFGFSFMKNVKRLS. Disordered regions lie at residues 62 to 89 and 101 to 123; these read GSSS…SKVV and LGVI…GSSS. Polar residues predominate over residues 70–84; the sequence is RNENWNRTQKQNQFR. CRM domains are found at residues 220-316 and 421-518; these read MTLS…DGSG and STLG…EVGE. A coiled-coil region spans residues 621–654; the sequence is SAKLVRKLERKLAFAEKKLLKAERALAKVEESLK. Positions 663 to 763 constitute a CRM 3 domain; that stretch reads EGITEEERFM…KDYKRPTTLR (101 aa). Positions 824–907 are disordered; that stretch reads MAYSSDEETE…LQNEELDVQP (84 aa). 2 stretches are compositionally biased toward acidic residues: residues 828–857 and 868–881; these read SDEE…DEEG and TDVE…DTDF. Positions 882–897 are enriched in polar residues; it reads GDNSASSTTPETTFVE.

As to quaternary structure, interacts with RNA. Part of large ribonucleo-protein particles that contain CAF1 and/or CAF2, and RNC1. Interacts with RFC3 in plastids. In terms of tissue distribution, expressed at low levels in roots and shoots.

The protein localises to the plastid. Its subcellular location is the chloroplast. Functionally, binds specific group II introns in chloroplasts and facilitates their splicing. Exhibits non-specific action during plastid rRNA biogenesis; RFC3 prevents unaccurate splicing to improve the accuracy of plastid rRNA processing. Acts on subgroup IIB introns. The substrates of the subgroup IIB also require the CRM domain proteins CAF1 or CAF2, with a simultaneous binding of CFM3B and CAF1 or CAF2. Required for seed development. The sequence is that of CRM-domain containing factor CFM3B, chloroplastic from Arabidopsis thaliana (Mouse-ear cress).